Reading from the N-terminus, the 256-residue chain is 5-oxoprolinase subunit A (256 aa).

It belongs to the LamB/PxpA family. Forms a complex composed of PxpA, PxpB and PxpC.

It carries out the reaction 5-oxo-L-proline + ATP + 2 H2O = L-glutamate + ADP + phosphate + H(+). In terms of biological role, catalyzes the cleavage of 5-oxoproline to form L-glutamate coupled to the hydrolysis of ATP to ADP and inorganic phosphate. This is 5-oxoprolinase subunit A from Geobacillus thermodenitrificans (strain NG80-2).